Reading from the N-terminus, the 120-residue chain is Large ribosomal subunit protein uL18 (120 aa).

The protein belongs to the universal ribosomal protein uL18 family. As to quaternary structure, part of the 50S ribosomal subunit; part of the 5S rRNA/L5/L18/L25 subcomplex. Contacts the 5S and 23S rRNAs.

In terms of biological role, this is one of the proteins that bind and probably mediate the attachment of the 5S RNA into the large ribosomal subunit, where it forms part of the central protuberance. The polypeptide is Large ribosomal subunit protein uL18 (Bacillus cytotoxicus (strain DSM 22905 / CIP 110041 / 391-98 / NVH 391-98)).